Reading from the N-terminus, the 288-residue chain is Quinate/shikimate dehydrogenase (288 aa).

Residues lysine 71 and aspartate 107 each contribute to the substrate site. NAD(+)-binding positions include 132–135 (AGGA), 155–158 (NRRD), lysine 205, 232–235 (CVYN), and glycine 255.

The protein belongs to the shikimate dehydrogenase family. In terms of assembly, homodimer.

It carries out the reaction L-quinate + NAD(+) = 3-dehydroquinate + NADH + H(+). The enzyme catalyses L-quinate + NADP(+) = 3-dehydroquinate + NADPH + H(+). It catalyses the reaction shikimate + NADP(+) = 3-dehydroshikimate + NADPH + H(+). The catalysed reaction is shikimate + NAD(+) = 3-dehydroshikimate + NADH + H(+). Its pathway is metabolic intermediate biosynthesis; chorismate biosynthesis; chorismate from D-erythrose 4-phosphate and phosphoenolpyruvate: step 4/7. Its function is as follows. The actual biological function of YdiB remains unclear, nor is it known whether 3-dehydroshikimate or quinate represents the natural substrate. Catalyzes the reversible NAD-dependent reduction of both 3-dehydroshikimate (DHSA) and 3-dehydroquinate to yield shikimate (SA) and quinate, respectively. It can use both NAD or NADP for catalysis, however it has higher catalytic efficiency with NAD. The chain is Quinate/shikimate dehydrogenase from Escherichia coli (strain 55989 / EAEC).